The chain runs to 211 residues: Urease accessory protein UreG (211 aa).

Residue 11-18 (GPVGAGKT) participates in GTP binding.

The protein belongs to the SIMIBI class G3E GTPase family. UreG subfamily. As to quaternary structure, homodimer. UreD, UreF and UreG form a complex that acts as a GTP-hydrolysis-dependent molecular chaperone, activating the urease apoprotein by helping to assemble the nickel containing metallocenter of UreC. The UreE protein probably delivers the nickel.

It is found in the cytoplasm. Its function is as follows. Facilitates the functional incorporation of the urease nickel metallocenter. This process requires GTP hydrolysis, probably effectuated by UreG. This is Urease accessory protein UreG from Actinobacillus pleuropneumoniae serotype 5b (strain L20).